Reading from the N-terminus, the 666-residue chain is Long chain acyl-CoA synthetase 5 (666 aa).

228–239 (IMYTSGTTGDPK) contacts ATP. The fatty acid-binding stretch occupies residues 495–519 (DGWLHTGDVGEWQPNGSMKIIDRKK).

It belongs to the ATP-dependent AMP-binding enzyme family. Mg(2+) is required as a cofactor.

The catalysed reaction is a long-chain fatty acid + ATP + CoA = a long-chain fatty acyl-CoA + AMP + diphosphate. It participates in lipid metabolism; fatty acid metabolism. In terms of biological role, activation of long-chain fatty acids for both synthesis of cellular lipids, and degradation via beta-oxidation. Preferentially uses palmitate, palmitoleate, oleate and linoleate. This chain is Long chain acyl-CoA synthetase 5 (LACS5), found in Arabidopsis thaliana (Mouse-ear cress).